The sequence spans 145 residues: MENLTNISIELNQQFNTKEEAIRFCGEKLVEAGCVEPAYIEAMIERDQLLSVYMGNFIAIPHGTEEAKKLVKKSGICVVQVPEGVNFGTEEDEKIATVLFGIAGVGEEHLQLVQQIALYCSDMDNVVQLADALSKEEITENLAIA.

Residues 2–145 form the PTS EIIA type-2 domain; the sequence is ENLTNISIEL…EEITENLAIA (144 aa). Residue His-62 is the Tele-phosphohistidine intermediate of the active site. A Phosphohistidine; by HPr modification is found at His-62.

It is found in the cytoplasm. Its function is as follows. The phosphoenolpyruvate-dependent sugar phosphotransferase system (sugar PTS), a major carbohydrate active transport system, catalyzes the phosphorylation of incoming sugar substrates concomitantly with their translocation across the cell membrane. The enzyme II CmtAB PTS system is involved in D-mannitol transport. This chain is Mannitol-specific phosphotransferase enzyme IIA component, found in Enterococcus faecalis (strain ATCC 700802 / V583).